The chain runs to 574 residues: Sulfate adenylyltransferase (574 aa).

The tract at residues 1 to 170 (MANAPHGGVL…VQAVSKPAYY (170 aa)) is N-terminal. Residues 171-395 (DYVALRYTPA…LRESYPPKAK (225 aa)) form a catalytic region. A sulfate-binding site is contributed by glutamine 198. Residues 198-201 (QTRN) and 292-295 (GRDH) each bind ATP. Active-site residues include threonine 199, arginine 200, and asparagine 201. Arginine 200 is a sulfate binding site. Residue alanine 296 coordinates sulfate. Methionine 334 contacts ATP. Residues 396 to 574 (QGFTLFLTGL…ILLLEAQSLI (179 aa)) form an allosteric regulation domain; adenylyl-sulfate kinase-like region. 3'-phosphoadenylyl sulfate is bound by residues 435–438 (ETVR), arginine 452, 478–479 (IA), and lysine 519.

The protein in the N-terminal section; belongs to the sulfate adenylyltransferase family. This sequence in the C-terminal section; belongs to the APS kinase family. In terms of assembly, homohexamer. Dimer of trimers.

It localises to the cytoplasm. It carries out the reaction sulfate + ATP + H(+) = adenosine 5'-phosphosulfate + diphosphate. It functions in the pathway sulfur metabolism; hydrogen sulfide biosynthesis; sulfite from sulfate: step 1/3. Its activity is regulated as follows. Allosterically inhibited by 3'-phosphoadenosine 5'-phosphosulfate (PAPS). Catalyzes the first intracellular reaction of sulfate assimilation, forming adenosine-5'-phosphosulfate (APS) from inorganic sulfate and ATP. Plays an important role in sulfate activation as a component of the biosynthesis pathway of sulfur-containing amino acids. This is Sulfate adenylyltransferase from Mycosarcoma maydis (Corn smut fungus).